Reading from the N-terminus, the 366-residue chain is Box C/D snoRNA protein 1 (366 aa).

Zn(2+) is bound by residues C5, C8, C17, C20, C25, C29, H33, and C39. Residues 5-39 (CGVCGIKEFKYKCPRCLVQTCSLECSKKHKTRDNC) form an HIT-type zinc finger. Residues 318 to 366 (DNAREEEDAEEDSQPTEEPVQKETQDASDSDSDSDDDYNPGLSMDFLTA) form a disordered region. Composition is skewed to acidic residues over residues 321–332 (REEEDAEEDSQP) and 343–355 (DASD…DDDY). S330 is modified (phosphoserine).

The protein belongs to the BCD1 family.

Its subcellular location is the nucleus. In terms of biological role, required for box C/D snoRNAs accumulation involved in snoRNA processing, snoRNA transport to the nucleolus and ribosome biogenesis. The chain is Box C/D snoRNA protein 1 (BCD1) from Saccharomyces cerevisiae (strain ATCC 204508 / S288c) (Baker's yeast).